The primary structure comprises 204 residues: High frequency lysogenization protein HflD homolog (204 aa).

Belongs to the HflD family.

The protein localises to the cytoplasm. The protein resides in the cell inner membrane. This chain is High frequency lysogenization protein HflD homolog, found in Shewanella sediminis (strain HAW-EB3).